We begin with the raw amino-acid sequence, 360 residues long: uncharacterized protein (360 aa).

To P.multocida PM1082.

This is an uncharacterized protein from Pasteurella multocida (strain Pm70).